A 400-amino-acid chain; its full sequence is Enoyl-[acyl-carrier-protein] reductase [NADH] 2 (400 aa).

NAD(+) is bound by residues 48–53 (GASSGF), 75–76 (FE), 112–113 (DA), and 141–142 (LA). Position 228 (tyrosine 228) interacts with substrate. Catalysis depends on tyrosine 238, which acts as the Proton donor. NAD(+) is bound by residues lysine 247 and 276-278 (LVT).

It belongs to the TER reductase family. Monomer.

The catalysed reaction is a 2,3-saturated acyl-[ACP] + NAD(+) = a (2E)-enoyl-[ACP] + NADH + H(+). Its pathway is lipid metabolism; fatty acid biosynthesis. Functionally, involved in the final reduction of the elongation cycle of fatty acid synthesis (FAS II). Catalyzes the reduction of a carbon-carbon double bond in an enoyl moiety that is covalently linked to an acyl carrier protein (ACP). The sequence is that of Enoyl-[acyl-carrier-protein] reductase [NADH] 2 from Vibrio vulnificus (strain YJ016).